The following is a 178-amino-acid chain: Large ribosomal subunit protein eL20 (178 aa).

This sequence belongs to the eukaryotic ribosomal protein eL20 family.

The polypeptide is Large ribosomal subunit protein eL20 (RPL18A) (Oryza sativa subsp. japonica (Rice)).